A 135-amino-acid chain; its full sequence is Lymphocyte antigen 6B (135 aa).

The signal sequence occupies residues 1-26 (MNRSCAMKSCVLILLLALLCAERAQG). Positions 27 to 119 (LNCYNCTMIP…PTGGSTWTMA (93 aa)) constitute a UPAR/Ly6 domain. 5 cysteine pairs are disulfide-bonded: C29–C54, C32–C41, C47–C75, C79–C99, and C100–C105. G113 carries GPI-anchor amidated glycine lipidation. The propeptide at 114–135 (STWTMAGVLLFILGSVLLQTLL) is removed in mature form.

The protein resides in the cell membrane. The protein is Lymphocyte antigen 6B (Ly6b) of Rattus norvegicus (Rat).